A 353-amino-acid polypeptide reads, in one-letter code: Inositol-tetrakisphosphate 1-kinase 3 (353 aa).

The interval 1 to 25 (MKLTDNEEITMNGTREMETTEQETS) is disordered. The 1D-myo-inositol 1,3,4-trisphosphate site is built by Lys-50 and Lys-92. The ATP site is built by Arg-127 and Lys-177. Residues 138-350 (NLSDSNGRVG…QSQCKKRALA (213 aa)) form the ATP-grasp domain. 2 residues coordinate 1D-myo-inositol 1,3,4-trisphosphate: His-188 and Lys-220. ATP contacts are provided by residues 209–220 (QEFVNHGGVLFK) and Ser-235. 3 residues coordinate Mg(2+): Asp-300, Asp-315, and Asn-317. Residue Asn-317 participates in 1D-myo-inositol 1,3,4-trisphosphate binding.

It belongs to the ITPK1 family. Monomer. The cofactor is Mg(2+). Highly expressed in leaves and flowers, and at lower levels in roots, stems, cauline leaves and siliques.

It carries out the reaction 1D-myo-inositol 3,4,5,6-tetrakisphosphate + ATP = 1D-myo-inositol 1,3,4,5,6-pentakisphosphate + ADP + H(+). The enzyme catalyses 1D-myo-inositol 1,3,4-trisphosphate + ATP = 1D-myo-inositol 1,3,4,5-tetrakisphosphate + ADP + H(+). The catalysed reaction is 1D-myo-inositol 1,3,4-trisphosphate + ATP = 1D-myo-inositol 1,3,4,6-tetrakisphosphate + ADP + H(+). Functionally, kinase that can phosphorylate various inositol polyphosphate such as Ins(3,4,5,6)P4 or Ins(1,3,4)P3. Phosphorylates Ins(3,4,5,6)P4 to form InsP5. This reaction is thought to have regulatory importance, since Ins(3,4,5,6)P4 is an inhibitor of plasma membrane Ca(2+)-activated Cl(-) channels, while Ins(1,3,4,5,6)P5 is not. Also phosphorylates Ins(1,3,4)P3 or a racemic mixture of Ins(1,4,6)P3 and Ins(3,4,6)P3 to form InsP4. Ins(1,3,4,6)P4 is an essential molecule in the hexakisphosphate (InsP6) pathway. The polypeptide is Inositol-tetrakisphosphate 1-kinase 3 (ITPK3) (Arabidopsis thaliana (Mouse-ear cress)).